A 428-amino-acid chain; its full sequence is Serine--tRNA ligase (428 aa).

235 to 237 provides a ligand contact to L-serine; it reads TAE. ATP is bound at residue 266-268; it reads RSE. Glu-289 contributes to the L-serine binding site. Position 353–356 (353–356) interacts with ATP; sequence EISS. Ser-389 provides a ligand contact to L-serine.

This sequence belongs to the class-II aminoacyl-tRNA synthetase family. Type-1 seryl-tRNA synthetase subfamily. In terms of assembly, homodimer. The tRNA molecule binds across the dimer.

Its subcellular location is the cytoplasm. It carries out the reaction tRNA(Ser) + L-serine + ATP = L-seryl-tRNA(Ser) + AMP + diphosphate + H(+). The enzyme catalyses tRNA(Sec) + L-serine + ATP = L-seryl-tRNA(Sec) + AMP + diphosphate + H(+). It participates in aminoacyl-tRNA biosynthesis; selenocysteinyl-tRNA(Sec) biosynthesis; L-seryl-tRNA(Sec) from L-serine and tRNA(Sec): step 1/1. In terms of biological role, catalyzes the attachment of serine to tRNA(Ser). Is also able to aminoacylate tRNA(Sec) with serine, to form the misacylated tRNA L-seryl-tRNA(Sec), which will be further converted into selenocysteinyl-tRNA(Sec). The chain is Serine--tRNA ligase from Shewanella pealeana (strain ATCC 700345 / ANG-SQ1).